The primary structure comprises 378 residues: Schlafen family member 2 (378 aa).

The protein belongs to the Schlafen family. In terms of tissue distribution, mainly expressed in the thymus, lymph node and spleen.

Its subcellular location is the cytoplasm. Its function is as follows. tRNA-binding protein involved in T-cell mediated immunity. Plays a key role during the metabolic reprograming phase of activated T-cell, when T-cells produce reactive oxygen species (ROS): acts by binding tRNAs and protecting them from cleavage by the oxidative stress-activated ribonuclease angiogenin (ANG). Also required for T-cell quiescence maintenance. The polypeptide is Schlafen family member 2 (Mus musculus (Mouse)).